Consider the following 450-residue polypeptide: Tubulin alpha chain (450 aa).

A GTP-binding site is contributed by Q11. K40 carries the post-translational modification N6-acetyllysine. GTP contacts are provided by E71, G144, T145, T179, N206, and N228. E71 is a binding site for Mg(2+). Residue E254 is part of the active site.

This sequence belongs to the tubulin family. In terms of assembly, dimer of alpha and beta chains. A typical microtubule is a hollow water-filled tube with an outer diameter of 25 nm and an inner diameter of 15 nM. Alpha-beta heterodimers associate head-to-tail to form protofilaments running lengthwise along the microtubule wall with the beta-tubulin subunit facing the microtubule plus end conferring a structural polarity. Microtubules usually have 13 protofilaments but different protofilament numbers can be found in some organisms and specialized cells. Requires Mg(2+) as cofactor. Undergoes a tyrosination/detyrosination cycle, the cyclic removal and re-addition of a C-terminal tyrosine residue by the enzymes tubulin tyrosine carboxypeptidase (TTCP) and tubulin tyrosine ligase (TTL), respectively. In terms of processing, acetylation of alpha chains at Lys-40 stabilizes microtubules and affects affinity and processivity of microtubule motors. This modification has a role in multiple cellular functions, ranging from cell motility, cell cycle progression or cell differentiation to intracellular trafficking and signaling.

The protein localises to the cytoplasm. Its subcellular location is the cytoskeleton. It catalyses the reaction GTP + H2O = GDP + phosphate + H(+). Functionally, tubulin is the major constituent of microtubules, a cylinder consisting of laterally associated linear protofilaments composed of alpha- and beta-tubulin heterodimers. Microtubules grow by the addition of GTP-tubulin dimers to the microtubule end, where a stabilizing cap forms. Below the cap, tubulin dimers are in GDP-bound state, owing to GTPase activity of alpha-tubulin. This chain is Tubulin alpha chain (TUBA), found in Prunus dulcis (Almond).